Here is a 209-residue protein sequence, read N- to C-terminus: MNSIKNHLMCEEIHKRFHLHPKVRKAMESIEREVFVPAPFKHFAYTLNALSMQAQQYISSPLTVAKMTQYLEIDHVDSVLEIGCGSGYQAAVLSQIFRRVFSVERIESLYLEARLRLKNLGLDNVHVKFADGNKGWEQYAPYDRILFSACAKNIPQALIDQLEEGGILVAPIQENNEQVIKRFVKQNNALRVQKVLEKCSFVPVIDGVQ.

The active site involves S59.

Belongs to the methyltransferase superfamily. L-isoaspartyl/D-aspartyl protein methyltransferase family.

The protein resides in the cytoplasm. The catalysed reaction is [protein]-L-isoaspartate + S-adenosyl-L-methionine = [protein]-L-isoaspartate alpha-methyl ester + S-adenosyl-L-homocysteine. Its function is as follows. Catalyzes the methyl esterification of L-isoaspartyl residues in peptides and proteins that result from spontaneous decomposition of normal L-aspartyl and L-asparaginyl residues. It plays a role in the repair and/or degradation of damaged proteins. The sequence is that of Protein-L-isoaspartate O-methyltransferase from Helicobacter pylori (strain G27).